The primary structure comprises 441 residues: uncharacterized protein (441 aa).

78–85 (GPRQAGKT) provides a ligand contact to ATP.

This is an uncharacterized protein from Mycobacterium bovis (strain ATCC BAA-935 / AF2122/97).